A 114-amino-acid chain; its full sequence is Large ribosomal subunit protein uL22 (114 aa).

It belongs to the universal ribosomal protein uL22 family. As to quaternary structure, part of the 50S ribosomal subunit.

In terms of biological role, this protein binds specifically to 23S rRNA; its binding is stimulated by other ribosomal proteins, e.g. L4, L17, and L20. It is important during the early stages of 50S assembly. It makes multiple contacts with different domains of the 23S rRNA in the assembled 50S subunit and ribosome. Its function is as follows. The globular domain of the protein is located near the polypeptide exit tunnel on the outside of the subunit, while an extended beta-hairpin is found that lines the wall of the exit tunnel in the center of the 70S ribosome. This is Large ribosomal subunit protein uL22 from Streptococcus agalactiae serotype Ia (strain ATCC 27591 / A909 / CDC SS700).